Consider the following 348-residue polypeptide: 3-isopropylmalate dehydrogenase (348 aa).

76 to 87 (GPKWTDPNNRPE) serves as a coordination point for NAD(+). Substrate-binding residues include R94, R104, R132, and D217. Residues D217, D241, and D245 each coordinate Mg(2+). 275 to 287 (GSAPDIAGKNVAN) lines the NAD(+) pocket.

The protein belongs to the isocitrate and isopropylmalate dehydrogenases family. LeuB type 1 subfamily. In terms of assembly, homodimer. It depends on Mg(2+) as a cofactor. The cofactor is Mn(2+).

The protein localises to the cytoplasm. It carries out the reaction (2R,3S)-3-isopropylmalate + NAD(+) = 4-methyl-2-oxopentanoate + CO2 + NADH. It functions in the pathway amino-acid biosynthesis; L-leucine biosynthesis; L-leucine from 3-methyl-2-oxobutanoate: step 3/4. Catalyzes the oxidation of 3-carboxy-2-hydroxy-4-methylpentanoate (3-isopropylmalate) to 3-carboxy-4-methyl-2-oxopentanoate. The product decarboxylates to 4-methyl-2 oxopentanoate. In Staphylococcus aureus (strain MRSA252), this protein is 3-isopropylmalate dehydrogenase.